A 75-amino-acid chain; its full sequence is Translational regulator CsrA (75 aa).

Belongs to the CsrA/RsmA family. In terms of assembly, homodimer; the beta-strands of each monomer intercalate to form a hydrophobic core, while the alpha-helices form wings that extend away from the core.

Its subcellular location is the cytoplasm. A translational regulator that binds mRNA to regulate translation initiation and/or mRNA stability. Usually binds in the 5'-UTR at or near the Shine-Dalgarno sequence preventing ribosome-binding, thus repressing translation. Its main target seems to be the major flagellin gene, while its function is anatagonized by FliW. The sequence is that of Translational regulator CsrA from Thermosipho melanesiensis (strain DSM 12029 / CIP 104789 / BI429).